Reading from the N-terminus, the 255-residue chain is Polycomb group RING finger protein 5 (255 aa).

The segment at C18 to G57 adopts an RING-type zinc-finger fold. The tract at residues W97 to H132 is disordered. Over residues D109–D119 the composition is skewed to basic and acidic residues.

Component of a PRC1-like complex that contains PCGF5, RNF2 and UBE2D3. Interacts with RNF2; the interaction is direct. Interacts with CBX6, CBX7 and CBX8. Interacts with AUTS2; the interaction is direct. Identified in a complex that contains AUTS2, PCGF5, CSNK2B and RNF2.

The protein resides in the nucleus. It is found in the nucleoplasm. Its function is as follows. Component of a Polycomb group (PcG) multiprotein PRC1-like complex, a complex class required to maintain the transcriptionally repressive state of many genes, including Hox genes, throughout development. PcG PRC1 complex acts via chromatin remodeling and modification of histones; it mediates monoubiquitination of histone H2A 'Lys-119', rendering chromatin heritably changed in its expressibility. Within the PRC1-like complex, regulates RNF2 ubiquitin ligase activity. Plays a redundant role with PCGF3 as part of a PRC1-like complex that mediates monoubiquitination of histone H2A 'Lys-119' on the X chromosome and is required for normal silencing of one copy of the X chromosome in XX females. This chain is Polycomb group RING finger protein 5 (PCGF5), found in Bos taurus (Bovine).